The primary structure comprises 278 residues: HTH-type transcriptional activator RhaS (278 aa).

In terms of domain architecture, HTH araC/xylS-type spans 174-272; that stretch reads NQLMAWLEDH…NWSPRDIRQG (99 aa). 2 DNA-binding regions (H-T-H motif) span residues 191–212 and 239–262; these read EAVA…KQHT and VTEI…RREF.

Binds DNA as a dimer.

Its subcellular location is the cytoplasm. Functionally, activates expression of the rhaBAD and rhaT operons. This chain is HTH-type transcriptional activator RhaS, found in Salmonella enteritidis PT4 (strain P125109).